A 235-amino-acid polypeptide reads, in one-letter code: Centromere protein H (235 aa).

Residues 1–23 are disordered; the sequence is MAGRLSESVGSGPGAEAETAADP. Positions 125-145 form a coiled coil; that stretch reads EIIQAHQQARVIRENLNDIRR.

The protein belongs to the CENP-H/MCM16 family. In terms of assembly, component of the CENPA-HI complex, at least composed of CENPH, CENPI, CENPK, CENPL, CENPM, CENPO and CENPP. Interacts with NDC80.

The protein localises to the nucleus. Its subcellular location is the chromosome. It is found in the centromere. The protein resides in the kinetochore. Functionally, component of the CENPA-HI complex, a centromeric complex involved in assembly of kinetochore proteins, mitotic progression and chromosome segregation. Required for the localization of CENPC but not CENPA to the centromere. It however may be involved in incorporation of newly synthesized CENPA into centromeres via its interaction with the CENPA-NAC complex. In Gallus gallus (Chicken), this protein is Centromere protein H (CENPH).